Reading from the N-terminus, the 540-residue chain is Suppressor of tumorigenicity 7 protein-like (540 aa).

Transmembrane regions (helical) follow at residues 24 to 44 (WSWTYICALWFAMVLTMVYVL), 68 to 88 (FYVALTGTSSLISGLILIFEW), 475 to 495 (LPFFILFTAGLCSFCAMLAML), and 502 to 522 (LMGVFVKAFFSTLFAPLGFFA).

Belongs to the ST7 family.

Its subcellular location is the membrane. The chain is Suppressor of tumorigenicity 7 protein-like (st7l) from Danio rerio (Zebrafish).